The sequence spans 338 residues: UPF0324 membrane protein TauZ (338 aa).

The next 9 helical transmembrane spans lie at 36-55, 75-92, 96-118, 125-147, 162-184, 223-245, 255-277, 290-309, and 314-336; these read YGAP…NFLA, LGVA…LAAL, AIAL…SRLV, ALLT…AAVL, LSVT…LFGF, LIRV…ARGL, PLLP…GLIP, WALL…GKML, and GAIA…GLHL.

Belongs to the UPF0324 family.

The protein localises to the cell membrane. This chain is UPF0324 membrane protein TauZ (tauZ), found in Paracoccus pantotrophus (Thiosphaera pantotropha).